Consider the following 1362-residue polypeptide: MTSSSKSRKSKSSKASKAAKEAPVSASRPLSKTPPPFRNQVIDKRALKQLVAWSYKNHGTAVTSSMADNLKDLGFKYATQAAVSISVDDLKVPEAKKDLLGQAEEQITATEERYRLGEITEVERHTKVIDTWTETNERLVDAVKKNFDENAPLNSVWMMANSGARGNMSQVRQLVGMRGLMANPQGEIIDLPIRTNFREGLTVTEYVISSYGARKGLVDTALRTADSGYLTRRLVDVAQDVIVREDDCGTTRHIVVDAEDGKFGSRLVGRLTAAQVVNADGEVLAERDTEIDPPLSKSFEAAGVKAVSVRSPLTCEANRSVCRKCYGWALAHNELVDLGEAVGIIAAQSIGEPGTQLTMRTFHTGGVSTAETGVVRSKVAGTVEFGSKARVRPYRTPHGVNAQQAEVDFNLTIKPSGKGKAQKIEITNGSLLFVDNGAEIDADVTVAQIAAGAVKKSVEKATKDVICDLAGQVRYEEAIQPREVTDRQGNITLKAQRLGRMWVLSGDVYNLPPNAQPVVGSETQVTEGQVLAEASQRSEYGGEVRLRDSIGDSREVQIVTTAMTLKDFKLLEESTHSGEIWNLEAKDGTRYRLNTIPGSKIGSGEVIAELADDRFRTGTGGLVKFAPGLAIKKARSAKNGYEVNKGGTLLWIPQETHEINKDISLLMITDGQWIEAGTEVVKDIFSQTAGIVTVTQKNDILREIIVRSGEFHLCTDAKALERFEGDGQMVNPGEDIAKGLSVDTMKYVQTVETPEGKGLLLRPVEEYTIPNVAQLPELSHVKQANGPHLGIKATQRLAFKDNELIKSVEGVELLKTQLLLETFDTTPQMTVDVEKAPDKRAKTISRLRLVILESILVRRDTMSDSSHGSTHTELQVEDGVSVKAGDVVATTQILCKQAGLAQLPEATEADPVRRMIVERPEDTTTLSTSGKPVVSVGQRIVDGDALAEGETASCCGEIEAVSGNSVTLRLGRPYMVSPDSVLHVRDGNLVQRGDGLALLVFERQKTGDIVQGLPRIEELLEARRPRESTILCKKPGTVEIKQGEDDESLAVNVIESDDAIGEYPILLGRNIMVSDGQQVTAGELLTDGPINPHELLECYFEDLRSRKPLMEAAQEAIANLQHRLVTEVQNVYKSQGVSIDDKHIEVIVRQMTSKVRVEDAGDTTLLPGELIELRQVEDTNQAMAITGGAPAEFTPVLLGITKASLNTDSFISAASFQETTRVLTEAAIEGKSDWLRGLKENVIIGRLIPAGTGFSGFEEELQKEAGPHPDILSEDPAGYRRMQNLRPDYTVDMPPAASASAVLDDPSDADLEATRTRHNIDPSASNFAAFTRPDADNELKEEQVVDAEAVEGLQEEGLLSDE.

Over residues 1–14 (MTSSSKSRKSKSSK) the composition is skewed to basic residues. The tract at residues 1-39 (MTSSSKSRKSKSSKASKAAKEAPVSASRPLSKTPPPFRN) is disordered. Low complexity predominate over residues 15 to 27 (ASKAAKEAPVSAS). Zn(2+)-binding residues include C248, C315, C322, and C325. A disordered region spans residues 1316 to 1336 (TRHNIDPSASNFAAFTRPDAD).

This sequence belongs to the RNA polymerase beta' chain family. RpoC2 subfamily. As to quaternary structure, in cyanobacteria the RNAP catalytic core is composed of 2 alpha, 1 beta, 1 beta', 1 gamma and 1 omega subunit. When a sigma factor is associated with the core the holoenzyme is formed, which can initiate transcription. Requires Zn(2+) as cofactor.

The enzyme catalyses RNA(n) + a ribonucleoside 5'-triphosphate = RNA(n+1) + diphosphate. Its function is as follows. DNA-dependent RNA polymerase catalyzes the transcription of DNA into RNA using the four ribonucleoside triphosphates as substrates. This chain is DNA-directed RNA polymerase subunit beta', found in Synechococcus sp. (strain CC9605).